The sequence spans 667 residues: DNA ligase (667 aa).

NAD(+)-binding positions include 32 to 36 (DSEYD), 81 to 82 (SL), and Glu-110. Residue Lys-112 is the N6-AMP-lysine intermediate of the active site. 4 residues coordinate NAD(+): Arg-133, Glu-167, Lys-283, and Lys-307. The Zn(2+) site is built by Cys-401, Cys-404, Cys-419, and Cys-424. The 82-residue stretch at 586–667 (EGHPDFKDKT…FVQKQNEIEG (82 aa)) folds into the BRCT domain.

The protein belongs to the NAD-dependent DNA ligase family. LigA subfamily. The cofactor is Mg(2+). It depends on Mn(2+) as a cofactor.

The enzyme catalyses NAD(+) + (deoxyribonucleotide)n-3'-hydroxyl + 5'-phospho-(deoxyribonucleotide)m = (deoxyribonucleotide)n+m + AMP + beta-nicotinamide D-nucleotide.. DNA ligase that catalyzes the formation of phosphodiester linkages between 5'-phosphoryl and 3'-hydroxyl groups in double-stranded DNA using NAD as a coenzyme and as the energy source for the reaction. It is essential for DNA replication and repair of damaged DNA. The sequence is that of DNA ligase from Staphylococcus saprophyticus subsp. saprophyticus (strain ATCC 15305 / DSM 20229 / NCIMB 8711 / NCTC 7292 / S-41).